The chain runs to 182 residues: Neuropeptide CCHamide-1 (182 aa).

Positions 1–22 (MWYSKCSWTLVVLVALFALVTG) are cleaved as a signal peptide. Cys-24 and Cys-31 are joined by a disulfide. Residue His-35 is modified to Histidine amide. Positions 39-182 (SGGKAVIDAK…ENYSGYELTK (144 aa)) are excised as a propeptide. Disordered regions lie at residues 67-103 (NNNN…AAPA) and 133-154 (QLQD…DAAA). Residues 87–103 (RNTNANSANNIPLAAPA) show a composition bias toward low complexity. N-linked (GlcNAc...) asparagine glycosylation is present at Asn-174.

As to expression, expressed in endocrine cells of the larval midgut (at protein level). In the brain, expressed in the optic lobes, lateral protocerebrum, subesophageal ganglion, and intermediate and superior medial protocerebrum (at protein level). Expressed in DN1a neurons but not in other clock neurons and expression follows a rhythmic pattern controlled by the circadian clock (at protein level). In the posterior midgut, expressed in enteroendocrine cells (at protein level). Low levels in larval brain with higher levels in larval and adult gut and adult brain.

Its subcellular location is the secreted. In terms of biological role, neuropeptide ligand for the CCHamide-1 receptor CCHa1-R. Neuromessenger mediating signaling between neuronal cells of the circadian clock network involved in regulation of sleep latency (the time required to fall asleep), amount of sleep and depth of sleep (arousability). Together with PDF, involved in regulating intensity and periodicity of daytime activity. In subsets of clock neurons modulates the rhythmic expression of PDP1 and PDF, and together with PDF modulates the rhythmic expression of circadian protein PER/period, but not TIM/timeless. Mediates signaling from DN1a (anterior dorsal neurons 1) clock neurons to s-LNv (small ventral lateral neurons) clock neurons through CCHa1-R, contributing to regulation of activity rhythms by the circadian clock, particularly in the morning. May be involved in signaling between clock neurons and non-clock neurons, such as the fan-shaped body, involved in sleep homeostasis. In response to a high protein diet mediates hormonal signaling between the gut and a CCHa1-R expressing subset of dopaminergic cells in the protocerebral anterior medial (PAM) cluster of the brain. This suppresses arousability by mechano-sensory stimulation (but not thermal stimulation) but is not involved in regulation of sleep patterns. This is Neuropeptide CCHamide-1 from Drosophila melanogaster (Fruit fly).